Consider the following 433-residue polypeptide: UPF0597 protein DNO_0106 (433 aa).

Belongs to the UPF0597 family.

This Dichelobacter nodosus (strain VCS1703A) protein is UPF0597 protein DNO_0106.